A 73-amino-acid polypeptide reads, in one-letter code: UPF0270 protein PMI2817 (73 aa).

The protein belongs to the UPF0270 family.

The chain is UPF0270 protein PMI2817 from Proteus mirabilis (strain HI4320).